The following is a 486-amino-acid chain: MSTFYTVISWLAIFGYWLLIASVTLRILMKRRAVPSAMAWLLIIYILPLVGIIAYLSFGELHLGKRRAERARTMWPSTARWLADLRSCRSIFATHNSEVAAPLFQLCERRQGIAGVKGNQLQLLTSTDDTLNALIRDIELAHTSIEMMFYIWQPGGLADRVAEAMMAAARRGIRCRLMLDSAGSVAFFRSPYPAMMREAGIEVVEALQVNLLRVFLRRMDLRQHRKVVLIDNFIAYTGSMNLVDPRYFKQDAGVGQWIDVMARMEGPVATTMGIYYAFDWEMETGKRILPPEPICNILPFEKESGHTIQVIASGPGFPEELIHQSLLTAVYSARQQLVMTTPYFVPSDDLLHAICTAAQRGVDVSIIVPKKNDSMMVGWASRAFFTEMLAAGVKIYQFEGGLLHTKSVLVDGQLSLVGTVNLDMRSLWLNFEITLVIDDDGFGSDLACVQEDYIARSSLLDPLEWLKRPLWQRVVERLFYFFSPLL.

Helical transmembrane passes span 3–23 (TFYT…IASV) and 38–58 (MAWL…YLSF). PLD phosphodiesterase domains are found at residues 219 to 246 (MDLR…VDPR) and 399 to 426 (EGGL…DMRS). Active-site residues include His224, Lys226, Asp231, His404, Lys406, and Asp411.

Belongs to the phospholipase D family. Cardiolipin synthase subfamily. ClsA sub-subfamily.

Its subcellular location is the cell inner membrane. It carries out the reaction 2 a 1,2-diacyl-sn-glycero-3-phospho-(1'-sn-glycerol) = a cardiolipin + glycerol. Functionally, catalyzes the reversible phosphatidyl group transfer from one phosphatidylglycerol molecule to another to form cardiolipin (CL) (diphosphatidylglycerol) and glycerol. This is Cardiolipin synthase A from Edwardsiella ictaluri (strain 93-146).